Here is a 706-residue protein sequence, read N- to C-terminus: Translation factor GUF1 homolog, mitochondrial (706 aa).

Residues 89–272 enclose the tr-type G domain; sequence SRIRNFSIIA…SIVKNVPPPQ (184 aa). GTP-binding positions include 98–105, 165–169, and 219–222; these read AHIDHGKS, DTPGH, and NKID.

It belongs to the TRAFAC class translation factor GTPase superfamily. Classic translation factor GTPase family. LepA subfamily.

The protein localises to the mitochondrion inner membrane. The enzyme catalyses GTP + H2O = GDP + phosphate + H(+). In terms of biological role, promotes mitochondrial protein synthesis. May act as a fidelity factor of the translation reaction, by catalyzing a one-codon backward translocation of tRNAs on improperly translocated ribosomes. Binds to mitochondrial ribosomes in a GTP-dependent manner. In Thalassiosira pseudonana (Marine diatom), this protein is Translation factor GUF1 homolog, mitochondrial.